The sequence spans 301 residues: Formamidopyrimidine-DNA glycosylase (301 aa).

P2 (schiff-base intermediate with DNA) is an active-site residue. E3 functions as the Proton donor in the catalytic mechanism. K58 functions as the Proton donor; for beta-elimination activity in the catalytic mechanism. 3 residues coordinate DNA: H109, R131, and K174. The FPG-type zinc-finger motif lies at S265 to K301. R291 (proton donor; for delta-elimination activity) is an active-site residue.

It belongs to the FPG family. In terms of assembly, monomer. The cofactor is Zn(2+).

It carries out the reaction Hydrolysis of DNA containing ring-opened 7-methylguanine residues, releasing 2,6-diamino-4-hydroxy-5-(N-methyl)formamidopyrimidine.. The enzyme catalyses 2'-deoxyribonucleotide-(2'-deoxyribose 5'-phosphate)-2'-deoxyribonucleotide-DNA = a 3'-end 2'-deoxyribonucleotide-(2,3-dehydro-2,3-deoxyribose 5'-phosphate)-DNA + a 5'-end 5'-phospho-2'-deoxyribonucleoside-DNA + H(+). Its function is as follows. Involved in base excision repair of DNA damaged by oxidation or by mutagenic agents. Acts as a DNA glycosylase that recognizes and removes damaged bases. Has a preference for oxidized purines, such as 7,8-dihydro-8-oxoguanine (8-oxoG). Has AP (apurinic/apyrimidinic) lyase activity and introduces nicks in the DNA strand. Cleaves the DNA backbone by beta-delta elimination to generate a single-strand break at the site of the removed base with both 3'- and 5'-phosphates. This Rhizobium leguminosarum bv. trifolii (strain WSM2304) protein is Formamidopyrimidine-DNA glycosylase.